The following is a 287-amino-acid chain: Histone H1 (287 aa).

Low complexity predominate over residues 1–11 (MATEEPVIVNE). Disordered stretches follow at residues 1–58 (MATE…THPP) and 120–287 (YKLP…RGRK). The span at 33–51 (GKAKKETKAKKPAAPRKRS) shows a compositional bias: basic residues. One can recognise an H15 domain in the interval 55-124 (THPPYFEMIK…KVKNSYKLPS (70 aa)). Residues 135 to 202 (AKKKPAAAKS…KAKPVAKAKP (68 aa)) are compositionally biased toward basic residues. Over residues 203 to 248 (KAAAAAKPKAAVKPKAAPAKTKAAVKPNLKAKTTTAKVAKTATRTT) the composition is skewed to low complexity. A compositionally biased stretch (basic residues) spans 276–287 (PAKKATPKRGRK).

The protein belongs to the histone H1/H5 family.

It is found in the nucleus. It localises to the chromosome. In terms of biological role, histones H1 are necessary for the condensation of nucleosome chains into higher-order structures. In Solanum lycopersicum (Tomato), this protein is Histone H1.